The following is a 239-amino-acid chain: 2,3,4,5-tetrahydropyridine-2,6-dicarboxylate N-acetyltransferase (239 aa).

It belongs to the transferase hexapeptide repeat family. DapH subfamily.

The catalysed reaction is (S)-2,3,4,5-tetrahydrodipicolinate + acetyl-CoA + H2O = L-2-acetamido-6-oxoheptanedioate + CoA. It functions in the pathway amino-acid biosynthesis; L-lysine biosynthesis via DAP pathway; LL-2,6-diaminopimelate from (S)-tetrahydrodipicolinate (acetylase route): step 1/3. In terms of biological role, catalyzes the transfer of an acetyl group from acetyl-CoA to tetrahydrodipicolinate. The protein is 2,3,4,5-tetrahydropyridine-2,6-dicarboxylate N-acetyltransferase of Staphylococcus aureus (strain MRSA252).